Here is a 500-residue protein sequence, read N- to C-terminus: MSRLPDRSLLTRCEIFVYFGVYIAYIVVGLYKIYGLRDHIVKEAKFQFPEGWSLYPFSQRRRDDSNDELENFGDFIVSFWPFYLLHVAVQGFIRWKRPRLQCLGFIGVCALALSVNLDWSSMVLLVTLIASYYIVSLLSLKFLVWLLSAGWILCINVMQKNVWWTDRVGYTEYVLVIVTMSWSVLRGCSYSLSKIGAKQEDLTRYSLVQYLGYAMYFPCLTYGPIISYQRFAARREDEVQNWLGFVGGVLRSAIWWLVMQCALHYFYIHYMSRDVRMVEMMDSVFWQHSAGYFMGQFFFLYYVVTYGLGIAFAVQDGIPAPNRPRCIGRIHFYSDMWKYFDEGLYEFLFQNIYAELCGKRSSAAAKFGATALTFAFVFVWHGCYTYVLIWSILNFLCLAAEKVFKTFTAMPEYQRWTQRHLGAVGAQRLYAMLATQLFIPAAFSNVYFIGGQEIGDFLMRGAYLSGVGNYVALCFCSYCFFQCSELLLTKSDGRSKTKTF.

10 helical membrane passes run 15 to 35, 73 to 93, 105 to 125, 134 to 154, 206 to 226, 243 to 263, 293 to 313, 372 to 392, 429 to 449, and 461 to 481; these read IFVY…KIYG, GDFI…QGFI, FIGV…MVLL, IVSL…WILC, SLVQ…GPII, LGFV…QCAL, FMGQ…IAFA, LTFA…IWSI, LYAM…VYFI, and GAYL…YCFF. Histidine 381 is an active-site residue.

Belongs to the membrane-bound acyltransferase family. HHAT subfamily.

The protein localises to the membrane. The catalysed reaction is N-terminal L-cysteinyl-[protein] + hexadecanoyl-CoA = N-terminal N-hexadecanoyl-L-cysteinyl-[protein] + CoA + H(+). The enzyme catalyses N-terminal L-cysteinyl-[protein]-C-terminal glycyl cholesterol ester + hexadecanoyl-CoA = N-terminal N-hexadecanoyl-L-cysteinyl-[protein]-C-terminal glycyl cholesterol ester + CoA + H(+). Its function is as follows. Required in hedgehog (hh) expressing cells for production of appropriate signaling activity in embryos and in the imaginal precursors of adult tissues. Acts within the secretory pathway to catalyze N-terminal palmitoylation of Hh; this lipid modification is required for the embryonic and larval patterning activities of the Hh signal. Not required for Wg signaling. This is Protein-cysteine N-palmitoyltransferase Rasp (rasp) from Drosophila melanogaster (Fruit fly).